The following is a 340-amino-acid chain: Ferrochelatase (340 aa).

The Fe cation site is built by histidine 189 and glutamate 292.

It belongs to the ferrochelatase family.

It localises to the cytoplasm. It catalyses the reaction heme b + 2 H(+) = protoporphyrin IX + Fe(2+). It participates in porphyrin-containing compound metabolism; protoheme biosynthesis; protoheme from protoporphyrin-IX: step 1/1. Catalyzes the ferrous insertion into protoporphyrin IX. The sequence is that of Ferrochelatase from Ectopseudomonas mendocina (strain ymp) (Pseudomonas mendocina).